The sequence spans 281 residues: MGNAKRATQNDEDYTFVSPVVKYLLFFFNMIFWIISLVLISIGVYSRIVKHETALACLTVDPALILMVVGILMFFITFCGCVGSLRENICLLQTFCIFLTIMFLLQLLAGVLGFVFSDKARGKVTDMFDNAIKHYRDDLDLQNLIDYGQKQFNCCGGISFMDWSKNMYFNCSDDNPSRERCSVPFSCCLHAKEETIINTMCGHGMQALNYLAASAFINTNGCIDILVNWIHSNLFLLGGIALGLTIPQLVGILLSQVLINQIQDQIKLQNYNQQHRSDPWS.

Over 1–23 (MGNAKRATQNDEDYTFVSPVVKY) the chain is Cytoplasmic. Residues 24–44 (LLFFFNMIFWIISLVLISIGV) traverse the membrane as a helical segment. Over 45–62 (YSRIVKHETALACLTVDP) the chain is Extracellular. The chain crosses the membrane as a helical span at residues 63 to 83 (ALILMVVGILMFFITFCGCVG). Residues 84–94 (SLRENICLLQT) are Cytoplasmic-facing. Residues 95 to 115 (FCIFLTIMFLLQLLAGVLGFV) traverse the membrane as a helical segment. Over 116–233 (FSDKARGKVT…DILVNWIHSN (118 aa)) the chain is Extracellular. Cystine bridges form between cysteine 154–cysteine 222, cysteine 155–cysteine 187, cysteine 171–cysteine 181, and cysteine 188–cysteine 201. Asparagine 170 is a glycosylation site (N-linked (GlcNAc...) asparagine). Residues 234 to 254 (LFLLGGIALGLTIPQLVGILL) traverse the membrane as a helical segment. Residues 255 to 281 (SQVLINQIQDQIKLQNYNQQHRSDPWS) lie on the Cytoplasmic side of the membrane.

The protein belongs to the tetraspanin (TM4SF) family. Homodimer; disulfide-linked.

The protein resides in the cell membrane. The protein localises to the cell junction. It is found in the adherens junction. It localises to the cytoplasm. Functionally, part of TspanC8 subgroup, composed of 6 members that interact with the transmembrane metalloprotease ADAM10. This interaction is required for ADAM10 exit from the endoplasmic reticulum and for enzymatic maturation and trafficking to the cell surface as well as substrate specificity. Different TspanC8/ADAM10 complexes have distinct substrates. The sequence is that of Tetraspanin-33 (tspan33) from Danio rerio (Zebrafish).